The primary structure comprises 351 residues: Glycerol-3-phosphate dehydrogenase [NAD(P)+] (351 aa).

Serine 12, tryptophan 13, histidine 33, and lysine 114 together coordinate NADPH. Sn-glycerol 3-phosphate-binding residues include lysine 114, glycine 145, and serine 147. Alanine 149 lines the NADPH pocket. Residues lysine 200, aspartate 253, serine 263, arginine 264, and asparagine 265 each contribute to the sn-glycerol 3-phosphate site. The active-site Proton acceptor is the lysine 200. Arginine 264 is an NADPH binding site. 2 residues coordinate NADPH: valine 288 and glutamate 290.

Belongs to the NAD-dependent glycerol-3-phosphate dehydrogenase family.

It localises to the cytoplasm. It catalyses the reaction sn-glycerol 3-phosphate + NAD(+) = dihydroxyacetone phosphate + NADH + H(+). It carries out the reaction sn-glycerol 3-phosphate + NADP(+) = dihydroxyacetone phosphate + NADPH + H(+). It functions in the pathway membrane lipid metabolism; glycerophospholipid metabolism. Catalyzes the reduction of the glycolytic intermediate dihydroxyacetone phosphate (DHAP) to sn-glycerol 3-phosphate (G3P), the key precursor for phospholipid synthesis. The polypeptide is Glycerol-3-phosphate dehydrogenase [NAD(P)+] (Lacticaseibacillus paracasei (strain ATCC 334 / BCRC 17002 / CCUG 31169 / CIP 107868 / KCTC 3260 / NRRL B-441) (Lactobacillus paracasei)).